Consider the following 116-residue polypeptide: Putative pterin-4-alpha-carbinolamine dehydratase (116 aa).

The protein belongs to the pterin-4-alpha-carbinolamine dehydratase family.

The catalysed reaction is (4aS,6R)-4a-hydroxy-L-erythro-5,6,7,8-tetrahydrobiopterin = (6R)-L-erythro-6,7-dihydrobiopterin + H2O. This is Putative pterin-4-alpha-carbinolamine dehydratase from Xylella fastidiosa (strain 9a5c).